Consider the following 132-residue polypeptide: Small ribosomal subunit protein uS8 (132 aa).

This sequence belongs to the universal ribosomal protein uS8 family. Part of the 30S ribosomal subunit. Contacts proteins S5 and S12.

One of the primary rRNA binding proteins, it binds directly to 16S rRNA central domain where it helps coordinate assembly of the platform of the 30S subunit. The chain is Small ribosomal subunit protein uS8 from Gluconobacter oxydans (strain 621H) (Gluconobacter suboxydans).